An 85-amino-acid polypeptide reads, in one-letter code: Large ribosomal subunit protein bL27 (85 aa).

Residues 1–10 (MAQKKGGGST) show a composition bias toward gly residues. Positions 1 to 21 (MAQKKGGGSTRNGRDSQPKML) are disordered.

Belongs to the bacterial ribosomal protein bL27 family.

This is Large ribosomal subunit protein bL27 from Polaromonas naphthalenivorans (strain CJ2).